Consider the following 207-residue polypeptide: MWALDKIKGTTTVGIVCKDGVVLTADRRASLGNMVISKGVTKIFQVDDHLALAGAGAVGDILSLVRALRAESKLYRAKVGKEMSTKALATLTSNILSGRKYLPYFGWFLIGGYDEKPSLYSIDMAGGITEDKYVSAGSGMEFAYSILDNEYSEKITLNNGVKLAIKAINAAIKRDVFTGDGIMVVTIDREGYRELSKEEVEKLLKKL.

The propeptide at 1–9 (MWALDKIKG) is removed in mature form; by autocatalysis. The active-site Nucleophile is T10.

This sequence belongs to the peptidase T1B family. As to quaternary structure, the 20S proteasome core is composed of 14 alpha and 14 beta subunits that assemble into four stacked heptameric rings, resulting in a barrel-shaped structure. The two inner rings, each composed of seven catalytic beta subunits, are sandwiched by two outer rings, each composed of seven alpha subunits. The catalytic chamber with the active sites is on the inside of the barrel. Has a gated structure, the ends of the cylinder being occluded by the N-termini of the alpha-subunits. Is capped at one or both ends by the proteasome regulatory ATPase, PAN.

It is found in the cytoplasm. The enzyme catalyses Cleavage of peptide bonds with very broad specificity.. Its activity is regulated as follows. The formation of the proteasomal ATPase PAN-20S proteasome complex, via the docking of the C-termini of PAN into the intersubunit pockets in the alpha-rings, triggers opening of the gate for substrate entry. Interconversion between the open-gate and close-gate conformations leads to a dynamic regulation of the 20S proteasome proteolysis activity. Component of the proteasome core, a large protease complex with broad specificity involved in protein degradation. The polypeptide is Proteasome subunit beta 1 (Thermococcus sibiricus (strain DSM 12597 / MM 739)).